A 393-amino-acid chain; its full sequence is ATP phosphoribosyltransferase regulatory subunit (393 aa).

This sequence belongs to the class-II aminoacyl-tRNA synthetase family. HisZ subfamily. In terms of assembly, heteromultimer composed of HisG and HisZ subunits.

It is found in the cytoplasm. It participates in amino-acid biosynthesis; L-histidine biosynthesis; L-histidine from 5-phospho-alpha-D-ribose 1-diphosphate: step 1/9. Required for the first step of histidine biosynthesis. May allow the feedback regulation of ATP phosphoribosyltransferase activity by histidine. The polypeptide is ATP phosphoribosyltransferase regulatory subunit (Synechococcus sp. (strain RCC307)).